A 206-amino-acid chain; its full sequence is Small ribosomal subunit protein uS4 (206 aa).

Residues 96 to 161 form the S4 RNA-binding domain; it reads RRLDNVVYRM…QGRIQAALAL (66 aa).

Belongs to the universal ribosomal protein uS4 family. As to quaternary structure, part of the 30S ribosomal subunit. Contacts protein S5. The interaction surface between S4 and S5 is involved in control of translational fidelity.

One of the primary rRNA binding proteins, it binds directly to 16S rRNA where it nucleates assembly of the body of the 30S subunit. Its function is as follows. With S5 and S12 plays an important role in translational accuracy. This is Small ribosomal subunit protein uS4 from Legionella pneumophila (strain Corby).